A 193-amino-acid polypeptide reads, in one-letter code: Peptidyl-tRNA hydrolase (193 aa).

Tyr16 is a binding site for tRNA. His21 serves as the catalytic Proton acceptor. Residues Phe66, Asn68, and Asn114 each coordinate tRNA.

This sequence belongs to the PTH family. In terms of assembly, monomer.

It localises to the cytoplasm. It catalyses the reaction an N-acyl-L-alpha-aminoacyl-tRNA + H2O = an N-acyl-L-amino acid + a tRNA + H(+). Its function is as follows. Hydrolyzes ribosome-free peptidyl-tRNAs (with 1 or more amino acids incorporated), which drop off the ribosome during protein synthesis, or as a result of ribosome stalling. Functionally, catalyzes the release of premature peptidyl moieties from peptidyl-tRNA molecules trapped in stalled 50S ribosomal subunits, and thus maintains levels of free tRNAs and 50S ribosomes. This is Peptidyl-tRNA hydrolase from Pelobacter propionicus (strain DSM 2379 / NBRC 103807 / OttBd1).